A 377-amino-acid polypeptide reads, in one-letter code: 4-hydroxy-tetrahydrodipicolinate synthase 2, chloroplastic (377 aa).

Residues Met1–Ala51 constitute a chloroplast transit peptide. Residue Thr120 participates in pyruvate binding. The active-site Proton donor/acceptor is Tyr206. Lys234 acts as the Schiff-base intermediate with substrate in catalysis. Ile273 contacts pyruvate.

The protein belongs to the DapA family. In terms of assembly, tetramer of modified subunits derived from two genes in different combinations.

The protein localises to the plastid. It localises to the chloroplast. It carries out the reaction L-aspartate 4-semialdehyde + pyruvate = (2S,4S)-4-hydroxy-2,3,4,5-tetrahydrodipicolinate + H2O + H(+). It functions in the pathway amino-acid biosynthesis; L-lysine biosynthesis via DAP pathway; (S)-tetrahydrodipicolinate from L-aspartate: step 3/4. With respect to regulation, sensitive to lysine inhibition. This inhibition increase in an allosteric manner with increasing concentration of the inhibitor. Catalyzes the condensation of (S)-aspartate-beta-semialdehyde [(S)-ASA] and pyruvate to 4-hydroxy-tetrahydrodipicolinate (HTPA). The sequence is that of 4-hydroxy-tetrahydrodipicolinate synthase 2, chloroplastic from Triticum aestivum (Wheat).